Here is a 342-residue protein sequence, read N- to C-terminus: Probable alcohol acetyltransferase (342 aa).

The transit peptide at methionine 1–alanine 38 directs the protein to the mitochondrion. Positions phenylalanine 39–leucine 46 are cleaved as a propeptide — removed in mature form. Residues proline 75–proline 326 form the AB hydrolase-1 domain. Residues serine 152 and histidine 319 each act as charge relay system in the active site.

This sequence belongs to the AB hydrolase superfamily. Post-translationally, processed by both the mitochondrial processing peptidase (MPP) and the mitochondrial octapeptidyl aminopeptidase (OCT1).

Its subcellular location is the mitochondrion. Its function is as follows. Probable alcohol acetyltransferase that uses acetyl-CoA to synthesize acetate esters from various alcohols. Not involved in the synthesis of ethyl acetate. This chain is Probable alcohol acetyltransferase (IMO32), found in Saccharomyces cerevisiae (strain ATCC 204508 / S288c) (Baker's yeast).